Consider the following 515-residue polypeptide: Maturase K (515 aa).

Belongs to the intron maturase 2 family. MatK subfamily.

Its subcellular location is the plastid. The protein localises to the chloroplast. Usually encoded in the trnK tRNA gene intron. Probably assists in splicing its own and other chloroplast group II introns. This Pinus contorta (Shore pine) protein is Maturase K.